Consider the following 76-residue polypeptide: UPF0346 protein lhv_1069 (76 aa).

The protein belongs to the UPF0346 family.

This Lactobacillus helveticus (strain DPC 4571) protein is UPF0346 protein lhv_1069.